We begin with the raw amino-acid sequence, 303 residues long: RELT-like protein 2 (303 aa).

Residues 15–35 (LYMLFLLVLVFFLMGLVGFMI) traverse the membrane as a helical segment. Disordered stretches follow at residues 46-67 (CRTS…DDDM) and 111-303 (SSLQ…AGGV). S52 is modified (phosphoserine). Basic and acidic residues-rich tracts occupy residues 148–158 (RSKEGKSRPRP) and 172–188 (THIE…DGSP). Residues 194-212 (GSGGGQDPGGGQGPGGGQP) are compositionally biased toward gly residues.

Belongs to the RELT family. In terms of assembly, interacts with RELT, RELL1, OXSR1, PLSCR1 and TRAF2.

It is found in the cell membrane. Induces activation of MAPK14/p38 cascade, when overexpressed. Induces apoptosis, when overexpressed. In Bos taurus (Bovine), this protein is RELT-like protein 2 (RELL2).